The sequence spans 491 residues: Trigger factor (491 aa).

Positions 169 to 254 (GDRVTIDYLG…VKDVAAAAPI (86 aa)) constitute a PPIase FKBP-type domain. The interval 433 to 491 (KTVSKDELMAEDEAEDKPAKKAPAKKKAAAKAEAGEGEEAAAPKKKAPAKKKAADDSAE) is disordered. The span at 452 to 461 (KKAPAKKKAA) shows a compositional bias: basic residues.

It belongs to the FKBP-type PPIase family. Tig subfamily.

The protein localises to the cytoplasm. It carries out the reaction [protein]-peptidylproline (omega=180) = [protein]-peptidylproline (omega=0). Functionally, involved in protein export. Acts as a chaperone by maintaining the newly synthesized protein in an open conformation. Functions as a peptidyl-prolyl cis-trans isomerase. The protein is Trigger factor of Sinorhizobium fredii (strain NBRC 101917 / NGR234).